Here is a 621-residue protein sequence, read N- to C-terminus: ATP-dependent DNA helicase Q1 (621 aa).

Residues 100–275 (VNATMARKDI…QKILCVEKCL (176 aa)) form the Helicase ATP-binding domain. ATP is bound at residue 113-120 (MPTGGGKS). The DEVH box signature appears at 219 to 222 (DEVH). The Helicase C-terminal domain maps to 296-451 (SAEDFIENIA…EMVSYCQNIS (156 aa)). Zn(2+)-binding residues include Cys453, Cys471, Cys475, and Cys478. 2 positions are modified to N6-acetyllysine: Lys514 and Lys522. 2 positions are modified to phosphoserine: Ser597 and Ser602.

It belongs to the helicase family. RecQ subfamily. As to quaternary structure, may form homodimers or higher order oligomers. Interacts with EXO1. Interacts with MLH1. Interacts with PARP1. Requires Mg(2+) as cofactor. Mn(2+) serves as cofactor. The cofactor is Zn(2+).

The protein resides in the nucleus. The enzyme catalyses Couples ATP hydrolysis with the unwinding of duplex DNA by translocating in the 3'-5' direction.. It catalyses the reaction ATP + H2O = ADP + phosphate + H(+). The catalysed reaction is dATP + H2O = dADP + phosphate + H(+). In terms of biological role, DNA helicase that plays a role in DNA damage repair and genome stability. Exhibits a magnesium- and ATP-dependent DNA-helicase activity that unwinds single- and double-stranded DNA in a 3'-5' direction. Plays a role in restoring regressed replication forks. Required to restart stalled replication forks induced by abortive topoisomerase 1 and 2 lesions. May play a role in the repair of DNA that is damaged by ultraviolet light or other mutagens. The protein is ATP-dependent DNA helicase Q1 (Recql) of Rattus norvegicus (Rat).